Consider the following 268-residue polypeptide: Probable RNA methyltransferase C2A9.10 (268 aa).

A Bin3-type SAM domain is found at 23 to 258 (DPRLKCLPDS…RTMYIYKKKG (236 aa)).

The protein belongs to the methyltransferase superfamily.

Its function is as follows. Probable RNA methyltransferase. This Schizosaccharomyces pombe (strain 972 / ATCC 24843) (Fission yeast) protein is Probable RNA methyltransferase C2A9.10.